Reading from the N-terminus, the 258-residue chain is Imidazole glycerol phosphate synthase subunit HisF (258 aa).

Residues Asp-11 and Asp-130 contribute to the active site.

This sequence belongs to the HisA/HisF family. In terms of assembly, heterodimer of HisH and HisF.

Its subcellular location is the cytoplasm. It catalyses the reaction 5-[(5-phospho-1-deoxy-D-ribulos-1-ylimino)methylamino]-1-(5-phospho-beta-D-ribosyl)imidazole-4-carboxamide + L-glutamine = D-erythro-1-(imidazol-4-yl)glycerol 3-phosphate + 5-amino-1-(5-phospho-beta-D-ribosyl)imidazole-4-carboxamide + L-glutamate + H(+). It participates in amino-acid biosynthesis; L-histidine biosynthesis; L-histidine from 5-phospho-alpha-D-ribose 1-diphosphate: step 5/9. In terms of biological role, IGPS catalyzes the conversion of PRFAR and glutamine to IGP, AICAR and glutamate. The HisF subunit catalyzes the cyclization activity that produces IGP and AICAR from PRFAR using the ammonia provided by the HisH subunit. The polypeptide is Imidazole glycerol phosphate synthase subunit HisF (Citrobacter koseri (strain ATCC BAA-895 / CDC 4225-83 / SGSC4696)).